The sequence spans 312 residues: MAEEKSKSSAMDAFVKLEKVGEGTYGKVYRAMEKSTGKIVALKKTRLHEDEEGVPPTTLREVSLLRMLSRDPHVVRLLDVKQGQNKEGKTVLYLVFEYMDTDLKKYIRSFKQTGESIAPMNVKSLMYQLCKGVAFCHGHGVLHRDLKPHNLLMDRKTMMLKIADLGLARAYTLPIKKYTHEILTLWYRAPEVLLGATHYSPAVDMWSVACIFAELVTQKALFPGDSELQQLLHIFRLLGTPNEEIWPGVSTLVDWHEYPQWTAQPISSAVPGLDEKGLNLLSEMLHYEPSRRISAKKAMEHPYFDELDKSGL.

Positions 14–304 (FVKLEKVGEG…AKKAMEHPYF (291 aa)) constitute a Protein kinase domain. Residues 20 to 28 (VGEGTYGKV) and Lys43 contribute to the ATP site. Thr24 is subject to Phosphothreonine. At Tyr25 the chain carries Phosphotyrosine. Asp145 functions as the Proton acceptor in the catalytic mechanism. The residue at position 179 (Thr179) is a Phosphothreonine; by CAK.

This sequence belongs to the protein kinase superfamily. CMGC Ser/Thr protein kinase family. CDC2/CDKX subfamily.

It carries out the reaction L-seryl-[protein] + ATP = O-phospho-L-seryl-[protein] + ADP + H(+). It catalyses the reaction L-threonyl-[protein] + ATP = O-phospho-L-threonyl-[protein] + ADP + H(+). The enzyme catalyses [DNA-directed RNA polymerase] + ATP = phospho-[DNA-directed RNA polymerase] + ADP + H(+). Plays a key role in the control of the eukaryotic cell cycle. The sequence is that of Cell division control protein 2 homolog D (CDC2D) from Antirrhinum majus (Garden snapdragon).